A 460-amino-acid chain; its full sequence is MSVAQNTFPLSELMISLTTALDMTEGQPPEHCIRCCWIGMHIGMQLELSEPELHDLFFTLLLKDAGCSSNAARICELYATDDLTFKRRYKTVGTSLSSVINFIVKNTGSEQSWTERILTTIDILKNGNDYAQELIQTRCTRGADVARELRFSEAVAQGIHSLDEHWNGQGRPEQRKGEAIPLFSRIALLAQVFDVFQMEHSIEEALQEIMARSGVWFDPKLVEVVEQLVENPRFLSGLKATDISQRVMNLPPAQAHLPLDDAYLECIVTAFGKIVDAKSPYTAGHSERVAVYTDLIARQLAISDADRIWLRRAALLHDIGKLGVSNAILDKPGKLDEAEWRAVQAHAAYTEQILYKLSPFKTLARMAGAHHEKLDGTGYPRGVNGDEISLMTRIITTADIFDALSAERPYRAAMPIDKALAIMEENLHTAIDPECFAALKKALNLLPDEYTQLPHSSDKT.

Residues 28 to 189 (PPEHCIRCCW…IPLFSRIALL (162 aa)) enclose the HD domain. One can recognise an HD-GYP domain in the interval 260–455 (DDAYLECIVT…LPDEYTQLPH (196 aa)). Residues histidine 317 and aspartate 318 each contribute to the a divalent metal cation site. Lysine 321 acts as the Proton donor in catalysis. Positions 346, 370, 371, and 399 each coordinate a divalent metal cation.

Monomer. The cofactor is Mn(2+).

It catalyses the reaction 3',3'-cGAMP + H2O = 5'-pApG-3' + H(+). Functionally, phosphodiesterase (PDE) that catalyzes the hydrolysis of 3'3'-cyclic GMP-AMP (3'3'-cGAMP), leading to linear 5'-pApG. Counteracts the function of the 3'3'-cGAMP synthase DncV, and is involved in the modulation of intracellular 3'3'-cGAMP levels. Enhances bacterial chemotaxis and inhibits intestinal colonization in vivo. Thus exerts a crucial role in regulating bacterial infectivity through catalyzing 3'3'-cGAMP degradation. Is specific for 3'3'-cGAMP since it cannot degrade other cGAMP linkage isomers (3'2'-, 2'3'-, and 2'2'-cGAMPs); is also able to hydrolyze c-di-GMP but not c-di-AMP. The chain is 3'3'-cGAMP-specific phosphodiesterase 3 from Vibrio cholerae serotype O1 (strain ATCC 39315 / El Tor Inaba N16961).